Reading from the N-terminus, the 484-residue chain is Transmembrane protein 161B (484 aa).

The helical transmembrane segment at 108 to 128 threads the bilayer; that stretch reads LVDFTVAATVVYLITELYFCV. N-linked (GlcNAc...) asparagine glycosylation occurs at Asn-136. 2 helical membrane-spanning segments follow: residues 137–157 and 170–190; these read ISVVWSLLVLAFVMKILFSLT and SLCITFAFFFFVKAMAILIVT. N-linked (GlcNAc...) asparagine glycosylation is present at Asn-204. Helical transmembrane passes span 229 to 249, 266 to 286, 368 to 388, and 456 to 476; these read FKLILALLCALIGAFLTFPGL, VTQTLLHINFLAPLIMVLLWV, VFYYLCVIALQYIAPLVMLLH, and LSFFTWWIAACLFSTSLFGLF.

Belongs to the TMEM161 family.

It is found in the cell membrane. Its function is as follows. Essential for maintaining normal cardiac rhythm in the developing heart and for neonatal survival. Inhibits potassium and calcium currents in the cardiomyocytes, this assists in timely action potential repolarization and thereby maintains normal cardiac rhythm. The polypeptide is Transmembrane protein 161B (tmem161b) (Danio rerio (Zebrafish)).